We begin with the raw amino-acid sequence, 624 residues long: UvrABC system protein C (624 aa).

In terms of domain architecture, GIY-YIG spans 27 to 105; it reads LSPGVYRMLS…IKSLGPRYNI (79 aa). The region spanning 215-250 is the UVR domain; sequence RRVQHDLTARMESAAEAMEYEAAAVFRDRIRALTRI.

This sequence belongs to the UvrC family. Interacts with UvrB in an incision complex.

The protein resides in the cytoplasm. In terms of biological role, the UvrABC repair system catalyzes the recognition and processing of DNA lesions. UvrC both incises the 5' and 3' sides of the lesion. The N-terminal half is responsible for the 3' incision and the C-terminal half is responsible for the 5' incision. The chain is UvrABC system protein C from Paramagnetospirillum magneticum (strain ATCC 700264 / AMB-1) (Magnetospirillum magneticum).